Here is a 323-residue protein sequence, read N- to C-terminus: MDKIAILTSGGDASGMNATIAYLTKYAIAKQLEVFYVKNGYYGLYHNHFITSKELDLTDFFFMGGTVIGSSRFKQFQDPSLRKQAVLNLKKRGINNLVVIGGDGSYMGAKALSELGLNCFCLPGTIDNDVNSSEFTIGFWTALEAIRVNVEAIYHTTKSHNRLAIIEVMGRDCSDLTIFGGLATNASFVVTSKNSLDLNGFEKAVRKVLQFQNYCVVLVSENIYGKNGLPSLEMVKEHFENNAIKCNLVSLGHTQRGFSPNSIELFQISLMAKHTIDLVVNNANSQVIGMKNNQAVNYDFNTAFNLPKADRTKLLNQVNTAII.

Residues glycine 11, 72–73, and 102–105 each bind ATP; these read RF and GDGS. A Mg(2+)-binding site is contributed by aspartate 103. Substrate contacts are provided by residues 125-127, arginine 162, 169-171, glutamate 221, and 253-256; these read TID, MGR, and HTQR. Catalysis depends on aspartate 127, which acts as the Proton acceptor.

It belongs to the phosphofructokinase type A (PFKA) family. Homotetramer. Mg(2+) is required as a cofactor.

It is found in the cytoplasm. It carries out the reaction beta-D-fructose 6-phosphate + ATP = beta-D-fructose 1,6-bisphosphate + ADP + H(+). Its pathway is carbohydrate degradation; glycolysis; D-glyceraldehyde 3-phosphate and glycerone phosphate from D-glucose: step 3/4. Catalyzes the phosphorylation of D-fructose 6-phosphate to fructose 1,6-bisphosphate by ATP, the first committing step of glycolysis. The polypeptide is Probable ATP-dependent 6-phosphofructokinase (pfkA) (Mycoplasma genitalium (strain ATCC 33530 / DSM 19775 / NCTC 10195 / G37) (Mycoplasmoides genitalium)).